We begin with the raw amino-acid sequence, 422 residues long: uncharacterized protein (422 aa).

Positions 5–83 constitute an RRM domain; it reads CVVYVGNIPY…RRLRVDFPTA (79 aa). The disordered stretch occupies residues 337-358; the sequence is RSSSIPSSGSIRSPSLTTTSAQ.

Its subcellular location is the nucleus. This is an uncharacterized protein from Schizosaccharomyces pombe (strain 972 / ATCC 24843) (Fission yeast).